The sequence spans 302 residues: Hydra actinoporin-like toxin 4 (302 aa).

The N-terminal stretch at 1-17 (MLLFKLIVCFFFIFAIG) is a signal peptide. The segment at 22-93 (KKDETSGENE…PAPKQTTTKK (72 aa)) is disordered. A compositionally biased stretch (low complexity) spans 60–75 (KPPAAKPPAASKITKP). A compositionally biased stretch (pro residues) spans 76–86 (QVPPQKKPPAP). A Cell attachment site motif is present at residues 274–276 (KAG).

This sequence belongs to the actinoporin family. HALT subfamily. As to quaternary structure, octamer or nonamer in membranes. Monomer in the soluble state. In vitro, interacts with folate receptor alpha (of target organism).

It localises to the nematocyst. The protein localises to the secreted. It is found in the target cell membrane. Functionally, pore-forming protein that forms hydrophilic pores and causes cytolysis. Compared to equinatoxin-2 (AC P61914), it reveals lower cytolysis activity (5-12-fold difference, tested on erythrocytes), a larger pore size (probably 2-3 nm) and different affinity to membrane lipids (100-fold lower affinity to sphingomyelin). Binds to sulfatides. Shows cytolytic activity on HeLa cells, with a different potency than its paralogs (from most potent to less potent: HALT-4&gt;HALT-6~HALT-1&gt;HALT-3&gt;HALT-7&gt;HALT-2). This recombinant protein has the highest cytolytic activity compared to other rHALT proteins, probably due to its longer N-terminal sequence that may penetrate the lipid bilayer more effectively. Pore formation is a multi-step process that involves specific recognition of membrane lipid by a protein aromatic residues rich region, firm binding to the membrane (mainly driven by hydrophobic interactions) accompanied by the transfer of the N-terminal region to the lipid-water interface and finally pore formation after oligomerization of monomers. In vitro, binds to the folate receptor alpha (FOLR1), a GPI-anchored membrane protein that plays a major role in the uptake of folate/folic acid into cells via endocytosis, suggesting a possible involvement of this receptor in the mechanism of HALT-1-induced cell lysis. In vivo, does not cause visible paralysis in larvae of the blowfly Sarcophaga faculata, the most common arthropod prey of Hydra. The chain is Hydra actinoporin-like toxin 4 from Hydra vulgaris (Hydra).